The chain runs to 420 residues: Caspase-12 (420 aa).

The region spanning 1 to 92 (MAAKRTHERD…QLSLQFPSDD (92 aa)) is the CARD domain. Phosphoserine occurs at positions 85 and 90. The disordered stretch occupies residues 93-115 (EEDELQKMFTPSSASESRGKVED). Residues histidine 251 and cysteine 299 contribute to the active site.

It belongs to the peptidase C14A family. In terms of assembly, heterotetramer that consists of two anti-parallel arranged heterodimers, each one formed by two subunits (Potential). May interact with TRAF2.

Its function is as follows. Involved in the activation cascade of caspases responsible for apoptosis execution. The chain is Caspase-12 (Casp12) from Rattus norvegicus (Rat).